A 407-amino-acid polypeptide reads, in one-letter code: Tyrosine--tRNA ligase (407 aa).

L-tyrosine is bound at residue Y35. The 'HIGH' region motif lies at P40–H49. Residues Y168 and Q172 each coordinate L-tyrosine. The short motif at K228–T232 is the 'KMSKS' region element. K231 is an ATP binding site. The S4 RNA-binding domain occupies N341–V405.

Belongs to the class-I aminoacyl-tRNA synthetase family. TyrS type 1 subfamily. In terms of assembly, homodimer.

The protein localises to the cytoplasm. The catalysed reaction is tRNA(Tyr) + L-tyrosine + ATP = L-tyrosyl-tRNA(Tyr) + AMP + diphosphate + H(+). Functionally, catalyzes the attachment of tyrosine to tRNA(Tyr) in a two-step reaction: tyrosine is first activated by ATP to form Tyr-AMP and then transferred to the acceptor end of tRNA(Tyr). The sequence is that of Tyrosine--tRNA ligase from Clostridium botulinum (strain Loch Maree / Type A3).